The following is a 212-amino-acid chain: Ribonuclease HII (212 aa).

Positions 4–206 constitute an RNase H type-2 domain; it reads EVQCGIDEAG…YKKIKEDVES (203 aa). Asp-10, Glu-11, and Asp-103 together coordinate a divalent metal cation.

It belongs to the RNase HII family. It depends on Mn(2+) as a cofactor. Mg(2+) is required as a cofactor.

The protein localises to the cytoplasm. The enzyme catalyses Endonucleolytic cleavage to 5'-phosphomonoester.. Endonuclease that specifically degrades the RNA of RNA-DNA hybrids. This chain is Ribonuclease HII, found in Thermoplasma volcanium (strain ATCC 51530 / DSM 4299 / JCM 9571 / NBRC 15438 / GSS1).